A 478-amino-acid chain; its full sequence is Septin-4 (478 aa).

The interval 1–115 (MDHSLGWQGN…RSPWGKLDPY (115 aa)) is disordered. Residues serine 28, serine 29, and serine 68 each carry the phosphoserine modification. A compositionally biased stretch (polar residues) spans 84 to 93 (PQPSDSQQYF). Residues 94–108 (SAPAPLSPSSRPRSP) show a composition bias toward low complexity. Phosphoserine occurs at positions 117 and 118. The 274-residue stretch at 141 to 414 (KGFDFTLMVA…ENYRAQCIQS (274 aa)) folds into the Septin-type G domain. A G1 motif region spans residues 151 to 158 (GESGLGKS). GTP-binding positions include 151–158 (GESGLGKS) and threonine 185. Residues 208–211 (DTPG) are G3 motif. The G4 motif stretch occupies residues 289 to 292 (AKAD). 290-298 (KADTLTPPE) is a GTP binding site. Serine 325 is modified (phosphoserine). GTP contacts are provided by glycine 348 and arginine 363. The tract at residues 428-449 (LTRESGTDFPIPAVPPGTDPET) is disordered. Serine 432 bears the Phosphoserine mark. Threonine 434 bears the Phosphothreonine mark. Residues 447–478 (PETEKLIREKDEELRRMQEMLHKIQRQMKETH) are a coiled coil.

Belongs to the TRAFAC class TrmE-Era-EngA-EngB-Septin-like GTPase superfamily. Septin GTPase family. As to quaternary structure, septins polymerize into heterooligomeric protein complexes that form filaments, and can associate with cellular membranes, actin filaments and microtubules. GTPase activity is required for filament formation. Interacts with SEPTIN8. Component of a septin core octameric complex consisting of SEPTIN12, SEPTIN7, SEPTIN6 and SEPTIN2 or SEPTIN4 in the order 12-7-6-2-2-6-7-12 or 12-7-6-4-4-6-7-12. Interacts with SEPTIN14 (via C-terminus). Interacts with DYRK1A. Interacts with SLC6A3/DAT and SNCA/alpha-synuclein. Interacts with STX1A; in the striatum. Interacts with XIAP (via BIR3 domain) following the induction of apoptosis. Interacts with AREL1 (via HECT domain); in the cytoplasm following induction of apoptosis. In terms of assembly, interacts with DPYSL5. In terms of processing, phosphorylated by DYRK1A. Ubiquitinated by AREL1. Post-translationally, may be phosphorylated. Expressed in the cerebral cortex, striatum, midbrain, cerebellum and spinal cord (at protein level). Expressed in the substantia nigra pars compacta, ventral tegmental area, projection fiber bundles and in axon terminals surrounding striatal neurons (at protein level). Expressed in hair follicle stem cells (at protein level). Expressed in small intestinal crypts; abundantly expressed at the crypt base (at protein level). Widely expressed in the brain and to a lesser extent in the testis, lung and liver. In terms of tissue distribution, highly expressed in the brain and testis and, to a lesser extent in the heart, lung and kidney. In the brain, abundant in areas of high cell density, particularly in the stria terminalis. Expressed in the entorhinal, temporal and visual cortices and the hippocampus of the brain where is colocalizes with DYRK1A in postnatal day 1 and adult mice. Expressed and extensively colocalizes with DYRK1A in apical dendrites of pyramidal cells. As to expression, predominantly expressed in embryonic brain and dorsal root ganglion neurons. Expressed in LGR5-positive intestinal stem cells and lysozyme-positive Paneth cells (at protein level). Expressed in the brain and testis.

The protein resides in the cytoplasm. The protein localises to the cell projection. Its subcellular location is the cilium. It localises to the flagellum. It is found in the cytoplasmic vesicle. The protein resides in the secretory vesicle. The protein localises to the axon. Its subcellular location is the dendrite. It localises to the perikaryon. It is found in the synapse. The protein resides in the mitochondrion. The protein localises to the cytosol. Its function is as follows. Filament-forming cytoskeletal GTPase. Pro-apoptotic protein involved in LGR5-positive intestinal stem cell and Paneth cell expansion in the intestines, via its interaction with XIAP. May also play a role in the regulation of cell fate in the intestine. Positive regulator of apoptosis involved in hematopoietic stem cell homeostasis; via its interaction with XIAP. Negative regulator of repair and hair follicle regeneration in response to injury, due to inhibition of hair follicle stem cell proliferation, potentially via its interaction with XIAP. Plays an important role in male fertility and sperm motility. During spermiogenesis, essential for the establishment of the annulus (a fibrous ring structure connecting the midpiece and the principal piece of the sperm flagellum) which is a requisite for the structural and mechanical integrity of the sperm. Involved in the migration of cortical neurons and the formation of neuron leading processes during embryonic development. Required for dopaminergic metabolism in presynaptic autoreceptors; potentially via activity as a presynaptic scaffold protein. The sequence is that of Septin-4 from Mus musculus (Mouse).